A 385-amino-acid polypeptide reads, in one-letter code: 1-deoxy-D-xylulose 5-phosphate reductoisomerase 1 (385 aa).

NADPH-binding residues include Thr-11, Gly-12, Ser-13, Ile-14, Asn-39, and Asn-122. 1-deoxy-D-xylulose 5-phosphate is bound at residue Lys-123. Glu-124 is an NADPH binding site. A Mn(2+)-binding site is contributed by Asp-148. 1-deoxy-D-xylulose 5-phosphate contacts are provided by Ser-149, Glu-150, Ser-174, and His-197. Glu-150 provides a ligand contact to Mn(2+). Position 203 (Gly-203) interacts with NADPH. 1-deoxy-D-xylulose 5-phosphate-binding residues include Ser-210, Asn-215, Lys-216, and Glu-219. Glu-219 lines the Mn(2+) pocket.

This sequence belongs to the DXR family. It depends on Mg(2+) as a cofactor. Mn(2+) is required as a cofactor.

The catalysed reaction is 2-C-methyl-D-erythritol 4-phosphate + NADP(+) = 1-deoxy-D-xylulose 5-phosphate + NADPH + H(+). Its pathway is isoprenoid biosynthesis; isopentenyl diphosphate biosynthesis via DXP pathway; isopentenyl diphosphate from 1-deoxy-D-xylulose 5-phosphate: step 1/6. In terms of biological role, catalyzes the NADPH-dependent rearrangement and reduction of 1-deoxy-D-xylulose-5-phosphate (DXP) to 2-C-methyl-D-erythritol 4-phosphate (MEP). This Bacillus cereus (strain ATCC 14579 / DSM 31 / CCUG 7414 / JCM 2152 / NBRC 15305 / NCIMB 9373 / NCTC 2599 / NRRL B-3711) protein is 1-deoxy-D-xylulose 5-phosphate reductoisomerase 1.